Reading from the N-terminus, the 922-residue chain is MTETPTDGGSTPPSDGGGPGGRIEPVELQTSMQRAYIDYAMAVIVGRALPDVRDGLKPVHRRVLYAMYDGGYRPDRGFSKCSRVVGDVMGQYHPHGDTAIYDTLVRLAQPWVMRAPLIHGQGNFGSPGNDSAAAMRYTECRMAPLAMEMVRDINEDTVDFQPNYDGRSQEPVVLPARFPNLLVNGSAGIAVGMATNIPPHNLREVAEGARWALEHPDATREELQDALIERIKGPDFPNGALIVGRQGIEQAYRTGRGSITQRAVIEVDEDAKGRTNLVITELPYMVNPDNLALKIAELADSGKVQGISDVRDDTSDRTGQRLVVVLKRDAVARVVLNNLLKHTELQTNFSANMLALVDGVPRTLAIDQFISNWVTHQIDVIRRRTEYRLAEAEKRAHVLRGLVKALDMLDEVIALIRRSPDVAEAREGLIALLDIDEVQATAILDMQLRQLAALQRQKIIDDLAEIEARIADLKDILANVARQRQIVADELAEIVERYGDDRRSQIIAADGDLSMEDLIPDEELVVSITRGGYAKRTRADQYRTQRRGGKGVRGATLRGDDVVEHFIATTNHHWLLFFTTAGRVYRTKAYNLPEASRDAKGGHVAGLLSFQPDENIAQVLAIRDYDQAPYLVLATRDGLVKKTRLGDYNSPRQAGVIAINFRSEDDELIGAELVNPEDHILLVSRKGQSVRFQADDSQLRPMGRATGGVTGMKFRDGDSLLSMSVIRAAQVEAEEAAEASGESVEEMAETRGQWFGLHPQYVFTITDGGFAKRTQIPEYRVQSRGGIGIRAMKLANEDRGELVGAFIVEDGDEILSITSGGQVVRSPIDENFRPTGRSTMGVKFVTPKKGDSVAVVARSVEANGDDELDELDESALDEGGAEGGEVDESADAGTDATIDGSAASDVARTEGDTEPDPGESDG.

Residues 1-14 (MTETPTDGGSTPPS) show a composition bias toward low complexity. Residues 1 to 24 (MTETPTDGGSTPPSDGGGPGGRIE) are disordered. One can recognise a Topo IIA-type catalytic domain in the interval 49 to 518 (LPDVRDGLKP…ADGDLSMEDL (470 aa)). Residue Tyr137 is the O-(5'-phospho-DNA)-tyrosine intermediate of the active site. The short motif at 545 to 551 (QRRGGKG) is the GyrA-box element. The tract at residues 861 to 922 (EANGDDELDE…TEPDPGESDG (62 aa)) is disordered. Acidic residues-rich tracts occupy residues 863–890 (NGDD…DESA) and 912–922 (DTEPDPGESDG).

This sequence belongs to the type II topoisomerase GyrA/ParC subunit family. In terms of assembly, heterotetramer, composed of two GyrA and two GyrB chains. In the heterotetramer, GyrA contains the active site tyrosine that forms a transient covalent intermediate with DNA, while GyrB binds cofactors and catalyzes ATP hydrolysis.

The protein localises to the cytoplasm. The enzyme catalyses ATP-dependent breakage, passage and rejoining of double-stranded DNA.. A type II topoisomerase that negatively supercoils closed circular double-stranded (ds) DNA in an ATP-dependent manner to modulate DNA topology and maintain chromosomes in an underwound state. Negative supercoiling favors strand separation, and DNA replication, transcription, recombination and repair, all of which involve strand separation. Also able to catalyze the interconversion of other topological isomers of dsDNA rings, including catenanes and knotted rings. Type II topoisomerases break and join 2 DNA strands simultaneously in an ATP-dependent manner. The chain is DNA gyrase subunit A from Nocardioides sp. (strain ATCC BAA-499 / JS614).